Here is a 429-residue protein sequence, read N- to C-terminus: Integral membrane protein GPR137C (429 aa).

Residues 1–17 (MRVSVPGPAAAAAPAAG) are compositionally biased toward low complexity. The segment at 1–29 (MRVSVPGPAAAAAPAAGREPSTPGGGSGG) is disordered. Residues 1-48 (MRVSVPGPAAAAAPAAGREPSTPGGGSGGGGAVAAASGAAVPGSVQLA) are Lumenal-facing. A helical membrane pass occupies residues 49 to 69 (LSVLHALLYAALFAFAYLQLW). Residues 70–83 (RLLLYRERRLSYQS) are Cytoplasmic-facing. Residues 84 to 104 (LCLFLCLLWAALRTTLFSAAF) form a helical membrane-spanning segment. At 105-120 (SLSGSLPLLRPPAHLH) the chain is on the lumenal side. A helical membrane pass occupies residues 121–141 (FFPHWLLYCFPSCLQFSTLCL). Residues 142–167 (LNLYLAEVICKVRCATELDRHKILLH) are Cytoplasmic-facing. Residues 168-188 (LGFIMASLLFLVVNLTCAMLV) form a helical membrane-spanning segment. The Lumenal portion of the chain corresponds to 189 to 205 (HGDVPENQLKWTVFVRA). Residues 206-226 (LINDSLFILCAISLVCYICKI) traverse the membrane as a helical segment. The Cytoplasmic segment spans residues 227–246 (TKMSSANVYLESKGMSLCQT). The helical transmembrane segment at 247–267 (VVVGSVVILLYSSRACYNLVV) threads the bilayer. The Lumenal portion of the chain corresponds to 268-300 (VTISQDTLESPFNYGWDNLSDKAHVEDISGEEY). N-linked (GlcNAc...) asparagine glycosylation is present at N285. A helical membrane pass occupies residues 301 to 321 (IVFGMVLFLWEHVPAWSVVLF). The Cytoplasmic segment spans residues 322-429 (FRAQRLNQNL…HHSLYVTPQN (108 aa)).

It belongs to the GPR137 family.

It is found in the lysosome membrane. Functionally, lysosomal integral membrane protein that may regulate MTORC1 complex translocation to lysosomes. The protein is Integral membrane protein GPR137C (GPR137C) of Homo sapiens (Human).